The sequence spans 326 residues: Amino acid--[acyl-carrier-protein] ligase 1 (326 aa).

Zn(2+) is bound at residue cysteine 131. ATP is bound by residues arginine 159, glutamate 161, and 168–169 (RL). Glutamate 176 contacts Zn(2+). Glutamate 176 provides a ligand contact to an L-alpha-amino acid. ATP-binding positions include lysine 235 and 250–253 (ACMS). Cysteine 279 serves as a coordination point for Zn(2+). Residue arginine 286 coordinates ATP.

It belongs to the class-II aminoacyl-tRNA synthetase family. Amino acid--[acyl-carrier-protein] ligase subfamily. In terms of assembly, homodimer. Requires Zn(2+) as cofactor.

The catalysed reaction is an L-alpha-amino acid + holo-[ACP] + ATP = an L-alpha-aminoacyl-[ACP] + AMP + diphosphate. Functionally, catalyzes the ATP-dependent activation of L-glycine and its transfer to the phosphopantetheine prosthetic group covalently attached to the vicinal carrier protein bsr0959 of yet unknown function. May participate in nonribosomal peptide synthesis or related processes. L-alanine is a poor substrate whereas L-serine or D-amino acids are not substrates for ATP-dependent activation. Does not display tRNA aminoacylation activity. This chain is Amino acid--[acyl-carrier-protein] ligase 1, found in Bradyrhizobium diazoefficiens (strain JCM 10833 / BCRC 13528 / IAM 13628 / NBRC 14792 / USDA 110).